Consider the following 239-residue polypeptide: Octanoyltransferase (239 aa).

The BPL/LPL catalytic domain maps to 48–236 (DGGDELVWLV…AFEAVFGETT (189 aa)). Substrate is bound by residues 87–94 (RGGEYTYH), 167–169 (ALG), and 180–182 (GLS). Cys-198 acts as the Acyl-thioester intermediate in catalysis.

Belongs to the LipB family.

The protein localises to the cytoplasm. The enzyme catalyses octanoyl-[ACP] + L-lysyl-[protein] = N(6)-octanoyl-L-lysyl-[protein] + holo-[ACP] + H(+). Its pathway is protein modification; protein lipoylation via endogenous pathway; protein N(6)-(lipoyl)lysine from octanoyl-[acyl-carrier-protein]: step 1/2. Catalyzes the transfer of endogenously produced octanoic acid from octanoyl-acyl-carrier-protein onto the lipoyl domains of lipoate-dependent enzymes. Lipoyl-ACP can also act as a substrate although octanoyl-ACP is likely to be the physiological substrate. This is Octanoyltransferase from Rhizobium johnstonii (strain DSM 114642 / LMG 32736 / 3841) (Rhizobium leguminosarum bv. viciae).